The following is a 125-amino-acid chain: Small ribosomal subunit protein eS8 (125 aa).

The segment at 1-30 (MTIFQGRATRKPSGGKLRPNHSKRRYELGR) is disordered.

It belongs to the eukaryotic ribosomal protein eS8 family. In terms of assembly, part of the 30S ribosomal subunit.

The chain is Small ribosomal subunit protein eS8 from Picrophilus torridus (strain ATCC 700027 / DSM 9790 / JCM 10055 / NBRC 100828 / KAW 2/3).